The chain runs to 122 residues: Semaphorin-like protein A43 (122 aa).

Residues 1–122 enclose the Sema domain; sequence MIYLYTADNV…RIMYLFYEYH (122 aa).

This sequence belongs to the semaphorin family.

The sequence is that of Semaphorin-like protein A43 (A43R) from Homo sapiens (Human).